Here is a 286-residue protein sequence, read N- to C-terminus: Aminoglycoside N(3)-acetyltransferase III (286 aa).

The protein belongs to the antibiotic N-acetyltransferase family.

The enzyme catalyses a 2-deoxystreptamine antibiotic + acetyl-CoA = an N(3)-acetyl-2-deoxystreptamine antibiotic + CoA + H(+). Resistance to antibiotics containing the 2-deoxy-streptamine ring including gentamicin, kanamycin, tobramycin, neomycin and apramycin. This Salmonella sp protein is Aminoglycoside N(3)-acetyltransferase III (aacC3).